Reading from the N-terminus, the 446-residue chain is Bifunctional protein GlmU (446 aa).

The interval 1 to 226 (MLAIAILAAG…PFEIKGINDR (226 aa)) is pyrophosphorylase. UDP-N-acetyl-alpha-D-glucosamine contacts are provided by residues 7–10 (LAAG), Lys21, Gln73, and 78–79 (GT). Asp103 contacts Mg(2+). Gly140, Glu155, Asn170, and Asn224 together coordinate UDP-N-acetyl-alpha-D-glucosamine. A Mg(2+)-binding site is contributed by Asn224. A linker region spans residues 227 to 247 (VQLSECEHYIQEELKSLWMSK). The interval 248–446 (GVSFVDPISC…SKAIIRTKAD (199 aa)) is N-acetyltransferase. UDP-N-acetyl-alpha-D-glucosamine contacts are provided by Arg329 and Lys347. His359 (proton acceptor) is an active-site residue. 2 residues coordinate UDP-N-acetyl-alpha-D-glucosamine: Tyr362 and Asn373. Residues Ala376, Ala419, and Arg436 each contribute to the acetyl-CoA site.

This sequence in the N-terminal section; belongs to the N-acetylglucosamine-1-phosphate uridyltransferase family. The protein in the C-terminal section; belongs to the transferase hexapeptide repeat family. Homotrimer. It depends on Mg(2+) as a cofactor.

Its subcellular location is the cytoplasm. It catalyses the reaction alpha-D-glucosamine 1-phosphate + acetyl-CoA = N-acetyl-alpha-D-glucosamine 1-phosphate + CoA + H(+). It carries out the reaction N-acetyl-alpha-D-glucosamine 1-phosphate + UTP + H(+) = UDP-N-acetyl-alpha-D-glucosamine + diphosphate. It participates in nucleotide-sugar biosynthesis; UDP-N-acetyl-alpha-D-glucosamine biosynthesis; N-acetyl-alpha-D-glucosamine 1-phosphate from alpha-D-glucosamine 6-phosphate (route II): step 2/2. It functions in the pathway nucleotide-sugar biosynthesis; UDP-N-acetyl-alpha-D-glucosamine biosynthesis; UDP-N-acetyl-alpha-D-glucosamine from N-acetyl-alpha-D-glucosamine 1-phosphate: step 1/1. The protein operates within bacterial outer membrane biogenesis; LPS lipid A biosynthesis. Functionally, catalyzes the last two sequential reactions in the de novo biosynthetic pathway for UDP-N-acetylglucosamine (UDP-GlcNAc). The C-terminal domain catalyzes the transfer of acetyl group from acetyl coenzyme A to glucosamine-1-phosphate (GlcN-1-P) to produce N-acetylglucosamine-1-phosphate (GlcNAc-1-P), which is converted into UDP-GlcNAc by the transfer of uridine 5-monophosphate (from uridine 5-triphosphate), a reaction catalyzed by the N-terminal domain. This Prochlorococcus marinus (strain NATL2A) protein is Bifunctional protein GlmU.